The primary structure comprises 92 residues: Large ribosomal subunit protein eL31 (92 aa).

At serine 2 the chain carries N-acetylserine.

This sequence belongs to the eukaryotic ribosomal protein eL31 family. As to quaternary structure, part of the 50S ribosomal subunit.

Its function is as follows. Binds to the 23S rRNA. Located at the polypeptide exit tunnel on the outside of the subunit. The polypeptide is Large ribosomal subunit protein eL31 (rpl31e) (Haloarcula marismortui (strain ATCC 43049 / DSM 3752 / JCM 8966 / VKM B-1809) (Halobacterium marismortui)).